The chain runs to 181 residues: Resolvase/recombinase (181 aa).

In terms of domain architecture, Resolvase/invertase-type recombinase catalytic spans 2–137; that stretch reads RLFGYARVST…EGRLEAKAKG (136 aa). Serine 10 (O-(5'-phospho-DNA)-serine intermediate) is an active-site residue. Residues 161–180 constitute a DNA-binding region (H-T-H motif); the sequence is AMEIAKRLKIGRSTVYKVLA.

It belongs to the site-specific recombinase resolvase family.

Its function is as follows. Site-specific recombination protein. The polypeptide is Resolvase/recombinase (Pseudomonas putida (Arthrobacter siderocapsulatus)).